The primary structure comprises 296 residues: Probable endonuclease 4 (296 aa).

Residues His68, His109, Glu144, Asp178, His181, His213, Asp226, His228, and Glu258 each coordinate Zn(2+).

This sequence belongs to the AP endonuclease 2 family. The cofactor is Zn(2+).

The catalysed reaction is Endonucleolytic cleavage to 5'-phosphooligonucleotide end-products.. Functionally, endonuclease IV plays a role in DNA repair. It cleaves phosphodiester bonds at apurinic or apyrimidinic (AP) sites, generating a 3'-hydroxyl group and a 5'-terminal sugar phosphate. The protein is Probable endonuclease 4 of Pediococcus pentosaceus (strain ATCC 25745 / CCUG 21536 / LMG 10740 / 183-1w).